Reading from the N-terminus, the 803-residue chain is Integrin beta-1 (803 aa).

Residues 1-24 (MAETNLTLLTWAGILCCLIWSGSA) form the signal peptide. A Blocked amino end (Gln) modification is found at Q25. The Extracellular portion of the chain corresponds to 25-733 (QQGGSDCIKA…ETPECPSGPD (709 aa)). Residues 30–80 (DCIKANAKSCGECIQAGPNCGWCKKTDFLQEGEPTSARCDDLAALKSKGCP) enclose the PSI domain. Intrachain disulfides connect C31/C49, C39/C469, C42/C68, C52/C79, C211/C217, C265/C305, C405/C419, C439/C467, C471/C491, C482/C494, C496/C505, C507/C538, C521/C536, C530/C541, C543/C558, C560/C581, C565/C579, C573/C584, C586/C595, C597/C620, C604/C618, and C612/C623. The VWFA domain maps to 144 to 382 (DYPIDLYYLM…QLIIDAYNSL (239 aa)). Mg(2+) is bound by residues S156 and S158. Residues S158, D161, D162, and E193 each contribute to the Ca(2+) site. Residues 211-217 (CTGDQNC) are CX3CL1-binding. N216 carries N-linked (GlcNAc...) asparagine glycosylation. Ca(2+) is bound by residues N248, D250, P252, and E253. E253 is a Mg(2+) binding site. N-linked (GlcNAc...) asparagine glycosylation is present at N273. The segment at 299 to 318 (LPNDGKCHLENNMYTMSHYY) is CX3CL1-binding. 6 N-linked (GlcNAc...) asparagine glycosylation sites follow: N367, N410, N421, N433, N445, and N486. Positions 387–470 (ILENSKLPKE…IHLQFICDCL (84 aa)) are interaction with TMEM182. I-EGF domains are found at residues 471-506 (CQSE…RLCE), 507-559 (CSTD…KYCE), 560-596 (CDNF…SACD), and 597-636 (CSLD…PTCE). The N-linked (GlcNAc...) asparagine glycan is linked to N525. N-linked (GlcNAc...) asparagine glycosylation occurs at N589. N624 carries N-linked (GlcNAc...) asparagine glycosylation. 6 cysteine pairs are disulfide-bonded: C625-C635, C638-C641, C645-C696, C651-C670, C654-C666, and C704-C728. N674 is a glycosylation site (N-linked (GlcNAc...) asparagine). Residues 734–756 (IIPIVAGVVAGIVLIGLALLLIW) form a helical membrane-spanning segment. Residues 757-803 (KLLMIIHDRREFAKFEKEKMNAKWDTGENPIYKSAVTTVVNPKYEGK) are Cytoplasmic-facing. At Y788 the chain carries Phosphotyrosine; by Tyr-kinases.

The protein belongs to the integrin beta chain family. As to quaternary structure, heterodimer of an alpha and a beta subunit. Beta-1 associates with either alpha-1, alpha-2, alpha-3, alpha-4, alpha-5, alpha-6, alpha-7, alpha-8, alpha-9, alpha-10, alpha-11 or alpha-V. Interacts with TMEM182 and LAMB1. In terms of tissue distribution, expressed on surface of embryonic fibroblasts (at protein level).

It localises to the cell membrane. It is found in the cell projection. The protein resides in the invadopodium membrane. The protein localises to the ruffle membrane. Its subcellular location is the melanosome. It localises to the lamellipodium. It is found in the ruffle. The protein resides in the cell junction. The protein localises to the focal adhesion. Functionally, integrins alpha-1/beta-1, alpha-2/beta-1, alpha-10/beta-1 and alpha-11/beta-1 are receptors for collagen. Integrins alpha-1/beta-1 and alpha-2/beta-1 recognize the proline-hydroxylated sequence G-F-P-G-E-R in collagen. Integrins alpha-2/beta-1, alpha-3/beta-1, alpha-4/beta-1, alpha-5/beta-1, alpha-8/beta-1, alpha-10/beta-1, alpha-11/beta-1 and alpha-V/beta-1 are receptors for fibronectin. Alpha-4/beta-1 recognizes one or more domains within the alternatively spliced CS-1 and CS-5 regions of fibronectin. Integrin alpha-5/beta-1 is a receptor for fibrinogen. Integrin alpha-1/beta-1, alpha-2/beta-1, alpha-6/beta-1 and alpha-7/beta-1 are receptors for lamimin. Integrin alpha-6/beta-1 (ITGA6:ITGB1) is present in oocytes and is involved in sperm-egg fusion. Integrin alpha-4/beta-1 is a receptor for VCAM1 and recognizes the sequence Q-I-D-S in VCAM1. Integrin alpha-9/beta-1 is a receptor for VCAM1, cytotactin and osteopontin. It recognizes the sequence A-E-I-D-G-I-E-L in cytotactin. Integrin alpha-3/beta-1 is a receptor for epiligrin, thrombospondin and CSPG4. Integrin alpha-3/beta-1 provides a docking site for FAP (seprase) at invadopodia plasma membranes in a collagen-dependent manner and hence may participate in the adhesion, formation of invadopodia and matrix degradation processes, promoting cell invasion. Alpha-3/beta-1 may mediate with LGALS3 the stimulation by CSPG4 of endothelial cells migration. Integrin alpha-V/beta-1 is a receptor for vitronectin. Beta-1 integrins recognize the sequence R-G-D in a wide array of ligands. When associated with alpha-7/beta-1 integrin, regulates cell adhesion and laminin matrix deposition. Involved in promoting endothelial cell motility and angiogenesis. Involved in osteoblast compaction through the fibronectin fibrillogenesis cell-mediated matrix assembly process and the formation of mineralized bone nodules. May be involved in up-regulation of the activity of kinases such as PKC via binding to KRT1. Together with KRT1 and RACK1, serves as a platform for SRC activation or inactivation. ITGA4:ITGB1 binds to fractalkine (CX3CL1) and may act as its coreceptor in CX3CR1-dependent fractalkine signaling. ITGA4:ITGB1 and ITGA5:ITGB1 bind to PLA2G2A via a site (site 2) which is distinct from the classical ligand-binding site (site 1) and this induces integrin conformational changes and enhanced ligand binding to site 1. ITGA5:ITGB1 acts as a receptor for fibrillin-1 (FBN1) and mediates R-G-D-dependent cell adhesion to FBN1. ITGA5:ITGB1 acts as a receptor for fibronectin FN1 and mediates R-G-D-dependent cell adhesion to FN1. ITGA5:ITGB1 is a receptor for IL1B and binding is essential for IL1B signaling. ITGA5:ITGB3 is a receptor for soluble CD40LG and is required for CD40/CD40LG signaling. Plays an important role in myoblast differentiation and fusion during skeletal myogenesis. In Gallus gallus (Chicken), this protein is Integrin beta-1 (ITGB1).